Consider the following 31-residue polypeptide: Cytochrome b6-f complex subunit 6 (31 aa).

A helical membrane pass occupies residues 3 to 23 (ILIGYIILLACAFGLAAGLFF).

The protein belongs to the PetL family. The 4 large subunits of the cytochrome b6-f complex are cytochrome b6, subunit IV (17 kDa polypeptide, PetD), cytochrome f and the Rieske protein, while the 4 small subunits are PetG, PetL, PetM and PetN. The complex functions as a dimer.

It is found in the plastid. The protein resides in the chloroplast thylakoid membrane. Component of the cytochrome b6-f complex, which mediates electron transfer between photosystem II (PSII) and photosystem I (PSI), cyclic electron flow around PSI, and state transitions. PetL is important for photoautotrophic growth as well as for electron transfer efficiency and stability of the cytochrome b6-f complex. This is Cytochrome b6-f complex subunit 6 from Rhodomonas salina (Cryptomonas salina).